The primary structure comprises 158 residues: MELSAIGEQVFAVESIRKKRVRKGKVEYLVKWKGWPPKYSTWEPEEHILDPRLVMAYEEKEEKDRASGYRKRGPKPKRLLLQESAAPDVLQATGDWEPVEQPPEEEAEADLTNGPPPWTPMLPSSEVTVTDITANSVTVTFREAQAAEGFFRDRSGKL.

The region spanning 11–69 (FAVESIRKKRVRKGKVEYLVKWKGWPPKYSTWEPEEHILDPRLVMAYEEKEEKDRASGY) is the Chromo domain. The disordered stretch occupies residues 60 to 124 (KEEKDRASGY…PPPWTPMLPS (65 aa)). A compositionally biased stretch (basic residues) spans 68–78 (GYRKRGPKPKR).

As to quaternary structure, component of a PRC1-like complex. Distinct PRC1-like core complexes are composed of a RING1 subunit (RING1B or RING1A), one of the six PCGF proteins (PCGF1-6), one PHC protein (PHC1-3) and one of the CBX proteins (CBX2, CBX4, CBX6, CBX7 or CBX8). The composition of the PRC1 complex may differ between the PRC1 complex in pluripotent embryonic stem cells containing RNF2, CBX7 and PCGF2, and the PRC1 complex in differentiating cells containing RNF2, CBX2, CBX4 and BMI1. Interacts with RING1. Interacts with RNF2/RING1B. Interacts with PCGF1, PCGF2, PCGF3, PCGF5 and PCGF6. Interacts (via chromodomain) with histone H3K9Me3 and H3K27me3. Interacts with H3K9Me2 and H4K20Me1. Interacts (via chromodomain) with single-stranded and double-stranded RNA; RNA binding seems to be required for the localization to chromatin.

Its subcellular location is the nucleus. The protein resides in the chromosome. Its function is as follows. Component of a Polycomb group (PcG) multiprotein PRC1-like complex, a complex class required to maintain the transcriptionally repressive state of many genes, including Hox genes, throughout development. PcG PRC1 complex acts via chromatin remodeling and modification of histones; it mediates monoubiquitination of histone H2A 'Lys-119', rendering chromatin heritably changed in its expressibility. Promotes histone H3 trimethylation at 'Lys-9' (H3K9me3). Binds to histone H3 trimethylated 'Lys-9' (H3K9me3) or at 'Lys-27' (H3K27me3). May possibly also bind trimethylated lysine residues in other proteins (in vitro). Binds non-coding, single-stranded and double-stranded RNA. Plays a role in the timely repression of differentiation-specific genes in pluripotent embryonic stem cells to maintain the undifferentiated state. Regulator of cellular lifespan by maintaining the repression of CDKN2A, but not by inducing telomerase activity. This Rattus norvegicus (Rat) protein is Chromobox protein homolog 7 (Cbx7).